We begin with the raw amino-acid sequence, 283 residues long: MADDTAYILSEYLQTLDNVPNETKHIFDEISVKEVAVHDIWKRIQAADSQIQSYIKSHGSLTPHPKEDALYSTIREEYQKAINIQNEKVQLADRARLGLTRHIKRLDDRLAKAGHGFTAAELLNAPDYYASSPYGGYSPSGASSARQTPAPSRSGASTAGRRRTSATTRGAIQNGVYHSPYTASLADSGSTRGQKVSNATATTQLETKADSTTPNEMVSEEDMEEDNEKYCFCQQGSYGQMVACDNANCEREWFHMECVGLKAPPEGTWYCEACRDQKLVDAK.

A compositionally biased stretch (low complexity) spans 137–171; that stretch reads YSPSGASSARQTPAPSRSGASTAGRRRTSATTRGA. Residues 137–224 form a disordered region; sequence YSPSGASSAR…NEMVSEEDME (88 aa). Residues 181–216 are compositionally biased toward polar residues; that stretch reads YTASLADSGSTRGQKVSNATATTQLETKADSTTPNE. A PHD-type zinc finger spans residues 228–277; the sequence is EKYCFCQQGSYGQMVACDNANCEREWFHMECVGLKAPPEGTWYCEACRDQ. Zn(2+) contacts are provided by cysteine 231, cysteine 233, cysteine 244, cysteine 249, histidine 255, cysteine 258, cysteine 271, and cysteine 274.

This sequence belongs to the ING family. In terms of assembly, interacts with H3K4me3 and to a lesser extent with H3K4me2. Component of a histone deacetylase complex.

The protein resides in the nucleus. In terms of biological role, component of a histone deacetylase complex responsible for the deacetylation of lysine residues on the N-terminal part of the core histones (H2A, H2B, H3 and H4). Histone deacetylation gives a tag for epigenetic repression and plays an important role in transcriptional regulation, cell cycle progression and developmental events. Has a role in silencing of mating type genes. This Schizosaccharomyces pombe (strain 972 / ATCC 24843) (Fission yeast) protein is Chromatin modification-related protein png1 (png1).